We begin with the raw amino-acid sequence, 888 residues long: Pumilio homology domain family member 4 (888 aa).

Residues Thr-205, Thr-212, and Thr-252 each carry the phosphothreonine modification. Disordered regions lie at residues 236–270 (KAKKPSVGANNTAKTRTQSISFDNTPSSTSFIPPT) and 467–551 (MNSA…RKIE). The span at 243–270 (GANNTAKTRTQSISFDNTPSSTSFIPPT) shows a compositional bias: polar residues. A Phosphoserine modification is found at Ser-256. Low complexity-rich tracts occupy residues 478-499 (NNNSMSSHNDNDNIGNSNYNNK) and 521-543 (NNNNNNNNNNNNNNNSNATNSNS). Residues 539-888 (TNSNSAEKQR…RIIGMLHLDS (350 aa)) form the PUM-HD domain. Pumilio repeat units follow at residues 563–598 (QYIGSIHSLCKDQHGCRFLQKQLDILGSKAADAIFE), 599–634 (ETKDYTVELMTDSFGNYLIQKLLEEVTTEQRIVLTK), 635–671 (ISSPHFVEISLNPHGTRALQKLIECIKTDEEAQIVVD), 672–707 (SLRPYTVQLSKDLNGNHVIQKCLQRLKPENFQFIFD), 708–743 (AISDSCIDIATHRHGCCVLQRCLDHGTTEQCDNLCD), 744–783 (KLLALVDKLTLDPFGNYVVQYIITKEAEKNKYDYTHKIVH), 784–821 (LLKPRAIELSIHKFGSNVIEKILKTAIVSEPMILEILN), and 823–861 (GGETGIQSLLNDSYGNYVLQTALDISHKQNDYLYKRLSE).

Functionally, is not essential for haploid growth, but may affect diploid formation. This is Pumilio homology domain family member 4 (PUF4) from Saccharomyces cerevisiae (strain ATCC 204508 / S288c) (Baker's yeast).